We begin with the raw amino-acid sequence, 145 residues long: Large ribosomal subunit protein uL11m (145 aa).

Belongs to the universal ribosomal protein uL11 family.

It is found in the mitochondrion. The sequence is that of Large ribosomal subunit protein uL11m (RPL11) from Reclinomonas americana.